Consider the following 186-residue polypeptide: Elongation factor P (186 aa).

This sequence belongs to the elongation factor P family.

It localises to the cytoplasm. It participates in protein biosynthesis; polypeptide chain elongation. Involved in peptide bond synthesis. Stimulates efficient translation and peptide-bond synthesis on native or reconstituted 70S ribosomes in vitro. Probably functions indirectly by altering the affinity of the ribosome for aminoacyl-tRNA, thus increasing their reactivity as acceptors for peptidyl transferase. In Maridesulfovibrio salexigens (strain ATCC 14822 / DSM 2638 / NCIMB 8403 / VKM B-1763) (Desulfovibrio salexigens), this protein is Elongation factor P.